The chain runs to 1086 residues: MDRAPAEQNVKLSAEVEPFVPQKKNLDAFVLPMALPSDNGSVSGVEPTPIPSYLITCYPFVQENQSNRQFPLYNNDIRWQQPSPSPTGPYLAYPIISAQPPVSTEYTYYQLMPAPCAQVMGFYHPFPTPYSSTFQAANTVNAISTECTERPNQLGQAFPLSSHRSRNGNRGPVVPKPQLLQQHIKNKRPQVKNVATQKETSATGPDSRSKIVLLVDASQQTDFPSDIANKSLSESTATMLWKAKGRRRRASHPAVESSSEQGASEADIDSDSGYCSPKHNNQSAPGALRDPASGTMNRLESSGCSGGVNWPKVTCQATQKRPWMEKNQAFSRGGRQTEQRNNLQVGFRCRGHSTSSERRQNLQKRQDNKHLNSTQSHRSDPNSESLYFEDEDGFQELSENGNSKDENIQQKLSSKVLDDLPENSPINIVQTPIPITTSVPKRAKSQKKKALAAALATAQEYSEISKKSCRKLYQKQLEKTKTPVQLDLGDMLAALEKQQQAMKARQITNTRPLAHPVVTTATFHTKDSNRKTLAKSQPCVTSFNSLDITSSKAKKGKEKEIAKLKRPTALKKVILKEREEKKGRLIVEHSVLGAEEPTETHLDLTNDLPQETVSQEDAGLSMPSDASLSPASQNSPYCMTPVSQGSPASSGIGSPMASSTITKIHSKRFREYCNQVLSKEIDECVTLLLQELVSFQERIYQKDPVRAKARRRLVMGLREVTKHMKLNKIKCVIISPNCEKIQSKGGLDEALYNVIAMAREQEIPFVFALGRKALGRCVNKLVPVSVVGIFNYFGAESLFNRLVELTEEARKAYKDMVAATEQEQAEEALRSVKTVPHHMGHSRNPSAASAISFCSVISEPISEVNEKEYETNWRSMVETSDGLEPSEMEKAAPCTHSPPEKPSRLALDTSLVGKQLPLAAGSITSAPSQGKPTGDKDELKPDDLEWASQQSTETGSLDGSCRDLLNSSITSTTSTLVPGMLEEEEDEEEEEEDYSHEPTAEEVQLNSRIESWVSETQRTMETLQLGKALPGSEEDSAEQSGEEAAEVPEGLESGADSETWTPDQPPKPSSNMGKEHPDSSSPPQST.

5 disordered regions span residues 155–207 (GQAF…GPDS), 243–386 (AKGR…SESL), 615–657 (QEDA…SPMA), 880–904 (SDGL…KPSR), and 919–1086 (AAGS…PQST). The segment covering 193 to 206 (NVATQKETSATGPD) has biased composition (polar residues). Phosphoserine is present on Ser276. 2 stretches are compositionally biased toward polar residues: residues 294 to 303 (GTMNRLESSG) and 328 to 344 (QAFS…NNLQ). Basic and acidic residues predominate over residues 355–370 (SSERRQNLQKRQDNKH). Over residues 624-657 (SDASLSPASQNSPYCMTPVSQGSPASSGIGSPMA) the composition is skewed to polar residues. Polar residues predominate over residues 922 to 931 (SITSAPSQGK). A compositionally biased stretch (basic and acidic residues) spans 933-943 (TGDKDELKPDD). Positions 947-957 (ASQQSTETGSL) are enriched in polar residues. Over residues 981–994 (LEEEEDEEEEEEDY) the composition is skewed to acidic residues. Residues 1004-1022 (QLNSRIESWVSETQRTMET) show a composition bias toward polar residues. The span at 1032–1046 (SEEDSAEQSGEEAAE) shows a compositional bias: acidic residues.

In terms of biological role, binds SECIS (Sec insertion sequence) elements present on selenocysteine (Sec) protein mRNAs, but does not promote Sec incorporation into selenoproteins. The chain is Selenocysteine insertion sequence-binding protein 2-like (Secisbp2l) from Mus musculus (Mouse).